Consider the following 1969-residue polypeptide: MSGNPDAFENDPGFPFLGMSREAKAASAARPFDSKKNCWIPDPEDGFVAAEIQSTTGDQVTVVTVKGNQITVKKDQCQEMNPPKFDKTEDMANLTFLNEASVLGNLKDRYKDLMIYTYSGLFCVVINPYKRLPIYSESVIKHFMGKRRNEMPPHLFAVSDEAYRNMVQDKENQSMLITGESGAGKTENTKKVISYFAIVGATQAAAGGKKEEGKKGGTLEEQIVQTNPVLEAFGNAKTVRNNNSSRFGKFIRTHFSGSGKLAGGDIEHYLLEKSRVVRQAPGERCYHIFYQIMSGNDASLRGKLKLNNDITYYHFCSQAELTIEGMDDKEEMRLTQEAFDIMGFEDQETMDLYRSTAGIMHMGEMKFKQRPREEQAEPDGEEDALNAAAMLGINAEEFLKALTKPRVRVGTEWVNKGQNLEQVSWAVSGLAKAIYARMFKWIINRCNKTLDAKEIERKHFIGVLDIAGFEIFDLNSFEQLWINFVNERLQQFFNHHMFVLEQEEYKREGIAWTFIDFGLDLQACIELIEKPLGIISILDEECIVPKATDMTYAQKLLDQHLGKHPNFQKPKPPKGKQGDAHFAIVHYAGTVRYNANNFLEKNKDPLNDTAVALLKHSVDNNLMLDIWQDYQTQEEAAEAAKAGQSGGGKRGKSSSFATVSMIYRESLNNLMNMLYQTHPHFIRCIIPNEKKASGVIDSALVLNQLTCNGVLEGIRICRKGFPNRMLYPDFKHRYAILAADAAKDSDPKKASVGILDKIANDGNLTDEEFKIGETKIFFKAGVLAKLEDLRDEILSRIVTMFQSRIRSYLAKAEVRRRYEQQTGLLIVQRNVRAWCTLRTWEWFKLFGKVKPMLKAGKEQEAMGELAEKIQKLEEAVQRGEIARSQLETQVADLVEEKNALFLSLETEKANLADAEERNEKLNQLKATLESKLTDITGQLEDMQERHEDLTRQKKKTEQELSDTKKHVQDLELTLRKAEQEKQSRDHQIRSLQDEMANQDESVAKLNKEKKHQEESNRKLNEDLQSEEDKVNHLEKIRNKLEQQMDELEETIDREKRSRSDIEKSKRKVEGDLKVAQENIDEITKQKQDVENTLKRKEDDLHHASTKLAEEQALAAKLQRQIKELQARIAELEEELESERNSRQKADRTRNELQRELEEISERLEQQGGFSAAQLEANKKREAEIAKLRREKEEDALNHETAVSSLRKRQVDAVAELTEQLETLQKLKAKGDAERAKLQRDLEEAQHATDSEVRARQEVEKSYKTIEVQFSELQTKADEQSRQLQDFAALKNRLNNENGDLNRTLEEMDNQVNSLHRLKSTLQSQLDETRRNFEEESRERQALAATAKNLEHENEILREHLDEEAESKADLTRQISKLNAEIQQWKARFDSEGLNKLEEIEAAKKALQLKVQELSDTNEGLFAKIASQEKVRHKLMQDLDDAQSDVEKAAAQVAYYEKHRRQFEKIVEEWKKKTDDLASELDAAQRDNRQLSTDLFKAKTANDELAEYLDSTRRENKSLAQEVKDLTDQLGEGGRSVAELQKIVRRLEVEKEELQKALDEAEAALEAEEAKVLRAQIEVSQIRSEIEKRIQEKEEEFENTRRNHQRALESMQATLEAETKQKEEALRIKKKLESDINDLEIALDHANRANADAQKTIKKYMETVRELQVQIEEEQRQKDELREQFLASEKRNGILQAEKDELAQQAEAAERARRNAEADCIELREQNNDLSNQVSSLTGWRRKLEGELLAVHAELEELVTELKNAQEQGQKASADAARLAEELRQEQEHSMHIERIRKGLELQIKEMQIRLDDAENAALKGGKKIIAQLEARIRAIEQELDGEQRRHQDTEKNWRKAERRVKEVEFQVIEEKKNEERLTELVDKLQTKLKIFKRQVEEAEEVAASNLNKYKVLQAQFEQADERAEIAENALSKMRNKIRASASVIPPDGFPLAQSPSSALVRSASNARFL.

The Myosin N-terminal SH3-like domain occupies 33–82 (DSKKNCWIPDPEDGFVAAEIQSTTGDQVTVVTVKGNQITVKKDQCQEMNP). A Myosin motor domain is found at 86–791 (DKTEDMANLT…VLAKLEDLRD (706 aa)). The residue at position 130 (Lys-130) is an N6,N6,N6-trimethyllysine. 179 to 186 (GESGAGKT) provides a ligand contact to ATP. Actin-binding stretches follow at residues 667 to 689 (LNNLMNMLYQTHPHFIRCIIPNE) and 770 to 784 (KIGETKIFFKAGVLA). An IQ domain is found at 794-823 (LSRIVTMFQSRIRSYLAKAEVRRRYEQQTG). A coiled-coil region spans residues 853–1941 (LKAGKEQEAM…KMRNKIRASA (1089 aa)). 3 disordered regions span residues 943 to 967 (QERHEDLTRQKKKTEQELSDTKKHV), 993 to 1029 (DEMANQDESVAKLNKEKKHQEESNRKLNEDLQSEEDK), and 1134 to 1153 (ELESERNSRQKADRTRNELQ). Composition is skewed to basic and acidic residues over residues 1001–1029 (SVAKLNKEKKHQEESNRKLNEDLQSEEDK) and 1137–1153 (SERNSRQKADRTRNELQ).

Belongs to the TRAFAC class myosin-kinesin ATPase superfamily. Myosin family. As to quaternary structure, muscle myosin is a hexameric protein that consists of 2 heavy chain subunits (MHC), 2 alkali light chain subunits (MLC) and 2 regulatory light chain subunits (MLC-2).

Its subcellular location is the cytoplasm. The protein resides in the myofibril. The protein localises to the sarcomere. It is found in the a band. In terms of biological role, essential for muscle contraction. Involved in ovulation likely by regulating the contraction of gonadal myoepithelial sheath cells. This is Myosin-3 from Caenorhabditis briggsae.